A 200-amino-acid chain; its full sequence is uncharacterized protein (200 aa).

A signal peptide spans 1 to 24 (MSRVFSCVLRACVCAGLCCWVCMG). The segment at 124–200 (GGRDLPMHGA…GEGGDNGEGE (77 aa)) is disordered. Residues 184–200 (LGDEGETGEGGDNGEGE) show a composition bias toward acidic residues.

This is an uncharacterized protein from Homo sapiens (Human).